A 346-amino-acid polypeptide reads, in one-letter code: UDP-3-O-acylglucosamine N-acyltransferase (346 aa).

Catalysis depends on H253, which acts as the Proton acceptor.

The protein belongs to the transferase hexapeptide repeat family. LpxD subfamily. Homotrimer.

It catalyses the reaction a UDP-3-O-[(3R)-3-hydroxyacyl]-alpha-D-glucosamine + a (3R)-hydroxyacyl-[ACP] = a UDP-2-N,3-O-bis[(3R)-3-hydroxyacyl]-alpha-D-glucosamine + holo-[ACP] + H(+). It functions in the pathway bacterial outer membrane biogenesis; LPS lipid A biosynthesis. In terms of biological role, catalyzes the N-acylation of UDP-3-O-acylglucosamine using 3-hydroxyacyl-ACP as the acyl donor. Is involved in the biosynthesis of lipid A, a phosphorylated glycolipid that anchors the lipopolysaccharide to the outer membrane of the cell. This Rickettsia felis (strain ATCC VR-1525 / URRWXCal2) (Rickettsia azadi) protein is UDP-3-O-acylglucosamine N-acyltransferase.